The primary structure comprises 256 residues: Pro-thyrotropin-releasing hormone (256 aa).

The first 24 residues, 1 to 24 (MQGPWLMMALALIFVLTGIPKSCA), serve as a signal peptide directing secretion. Disordered stretches follow at residues 76–128 (RQHP…EGDS) and 151–215 (VKRQ…HPCG). Proline amide is present on residues Pro-79, Pro-111, Pro-156, and Pro-174. The span at 104-113 (RPHKRQHPGR) shows a compositional bias: basic residues. The span at 177-188 (RFIDPELQRSWE) shows a compositional bias: basic and acidic residues. Pro-205 carries the post-translational modification Proline amide.

It belongs to the TRH family. Specifically expressed in hypothalamus and testis.

It localises to the secreted. In terms of biological role, functions as a regulator of the biosynthesis of TSH in the anterior pituitary gland and as a neurotransmitter/ neuromodulator in the central and peripheral nervous systems. The polypeptide is Pro-thyrotropin-releasing hormone (Trh) (Mus musculus (Mouse)).